The following is a 464-amino-acid chain: Soluble pyridine nucleotide transhydrogenase (464 aa).

35-44 is an FAD binding site; sequence DSRRQVGGNC.

It belongs to the class-I pyridine nucleotide-disulfide oxidoreductase family. Requires FAD as cofactor.

It localises to the cytoplasm. It catalyses the reaction NAD(+) + NADPH = NADH + NADP(+). In terms of biological role, conversion of NADPH, generated by peripheral catabolic pathways, to NADH, which can enter the respiratory chain for energy generation. The sequence is that of Soluble pyridine nucleotide transhydrogenase from Pseudomonas putida (strain W619).